Here is a 353-residue protein sequence, read N- to C-terminus: Photosystem II protein D1 (353 aa).

Residue Thr-2 is modified to N-acetylthreonine. A Phosphothreonine modification is found at Thr-2. A run of 3 helical transmembrane segments spans residues 29 to 46 (YIGW…TATS), 118 to 133 (HFLL…EWEL), and 142 to 156 (WIAV…AATA). Residue His-118 coordinates chlorophyll a. Residue Tyr-126 coordinates pheophytin a. Residues Asp-170 and Glu-189 each coordinate [CaMn4O5] cluster. The helical transmembrane segment at 197–218 (FHMLGVAGVFGGSLFSAMHGSL) threads the bilayer. Residue His-198 participates in chlorophyll a binding. Residues His-215 and 264 to 265 (SF) each bind a quinone. His-215 is a Fe cation binding site. Position 272 (His-272) interacts with Fe cation. A helical membrane pass occupies residues 274 to 288 (FLAAWPVIGIWFTSL). Positions 332, 333, 342, and 344 each coordinate [CaMn4O5] cluster. The propeptide occupies 345-353 (AVEAPSTIG).

This sequence belongs to the reaction center PufL/M/PsbA/D family. In terms of assembly, PSII is composed of 1 copy each of membrane proteins PsbA, PsbB, PsbC, PsbD, PsbE, PsbF, PsbH, PsbI, PsbJ, PsbK, PsbL, PsbM, PsbT, PsbX, PsbY, PsbZ, Psb30/Ycf12, at least 3 peripheral proteins of the oxygen-evolving complex and a large number of cofactors. It forms dimeric complexes. The D1/D2 heterodimer binds P680, chlorophylls that are the primary electron donor of PSII, and subsequent electron acceptors. It shares a non-heme iron and each subunit binds pheophytin, quinone, additional chlorophylls, carotenoids and lipids. D1 provides most of the ligands for the Mn4-Ca-O5 cluster of the oxygen-evolving complex (OEC). There is also a Cl(-1) ion associated with D1 and D2, which is required for oxygen evolution. The PSII complex binds additional chlorophylls, carotenoids and specific lipids. is required as a cofactor. Post-translationally, tyr-161 forms a radical intermediate that is referred to as redox-active TyrZ, YZ or Y-Z. In terms of processing, C-terminally processed by CTPA; processing is essential to allow assembly of the oxygen-evolving complex and thus photosynthetic growth.

It is found in the plastid. It localises to the chloroplast thylakoid membrane. It carries out the reaction 2 a plastoquinone + 4 hnu + 2 H2O = 2 a plastoquinol + O2. In terms of biological role, photosystem II (PSII) is a light-driven water:plastoquinone oxidoreductase that uses light energy to abstract electrons from H(2)O, generating O(2) and a proton gradient subsequently used for ATP formation. It consists of a core antenna complex that captures photons, and an electron transfer chain that converts photonic excitation into a charge separation. The D1/D2 (PsbA/PsbD) reaction center heterodimer binds P680, the primary electron donor of PSII as well as several subsequent electron acceptors. The chain is Photosystem II protein D1 from Landoltia punctata (Dotted duckmeat).